Consider the following 443-residue polypeptide: MVKERKTELVEGFRHSVPYINTHRGKTFVIMLGGEAIEHENFSSIVNDIGLLHSLGIRLVVVYGARPQIDANLAAHHHEPLYHKNIRVTDAKTLELVKQAAGTLQLDITARLSMSLNNTPLQGAHINVVSGNFIIAQPLGVDDGVDYCHSGRIRRIDEDAIHRQLDSGAIVLMGPVAVSVTGESFNLTSEEIATQLAIKLKAEKMIGFCSSQGVTNDDGDIVSELFPNEAQARVEAQEEKGDYNSGTVRFLRGAVKACRSGVRRCHLISYQEDGALLQELFSRDGIGTQIVMESAEQIRRATINDIGGILELIRPLEQQGILVRRSREQLEMEIDKFTIIQRDNTTIACAALYPFPEEKIGEMACVAVHPDYRSSSRGEVLLERIAAQAKQSGLSKLFVLTTRSIHWFQERGFTPVDIDLLPESKKQLYNYQRKSKVLMADLG.

In terms of domain architecture, N-acetyltransferase spans 296-443; sequence EQIRRATIND…KSKVLMADLG (148 aa).

The protein belongs to the acetyltransferase family. ArgA subfamily. As to quaternary structure, homohexamer.

The protein localises to the cytoplasm. It carries out the reaction L-glutamate + acetyl-CoA = N-acetyl-L-glutamate + CoA + H(+). It functions in the pathway amino-acid biosynthesis; L-arginine biosynthesis; N(2)-acetyl-L-ornithine from L-glutamate: step 1/4. The sequence is that of Amino-acid acetyltransferase (argA) from Escherichia coli O157:H7.